The following is a 603-amino-acid chain: Protein US26 (603 aa).

The segment covering 496–513 (EEEDQEEDDTSDDDDQEK) has biased composition (acidic residues). Disordered stretches follow at residues 496–536 (EEED…GSLE) and 549–568 (AVAE…DTAQ). Positions 517 to 533 (NPQNNIGSLTRTPSSPG) are enriched in polar residues.

The protein belongs to the herpesviridae US22 family.

The sequence is that of Protein US26 (US26) from Human cytomegalovirus (strain Merlin) (HHV-5).